A 986-amino-acid chain; its full sequence is Translation initiation factor IF-2 (986 aa).

Positions 49–59 are enriched in basic and acidic residues; sequence EFAKDNAKGDS. The segment at 49 to 370 is disordered; sequence EFAKDNAKGD…KNRLAKRHEY (322 aa). Over residues 60–112 the composition is skewed to low complexity; it reads KPASSAQKPAAKPVQQRRPAAPSAPASTSSSAPTPAAPARQASPASAHQQAPT. A compositionally biased stretch (basic and acidic residues) spans 135–168; the sequence is GQHDNRENGRDNREGRENGRQSRPNDRRNNDRRN. Low complexity predominate over residues 170 to 182; that stretch reads QGRPNNGQPGQHQ. Composition is skewed to gly residues over residues 254–286 and 296–353; these read GRGG…GGPR and GQGG…GRQG. Basic residues predominate over residues 357–366; sequence SKARKNRLAK. Positions 479–651 constitute a tr-type G domain; sequence PRPPVVTVMG…VLLTADAELD (173 aa). Positions 488–495 are G1; that stretch reads GHVDHGKT. A GTP-binding site is contributed by 488–495; the sequence is GHVDHGKT. A G2 region spans residues 513–517; that stretch reads GITQR. The G3 stretch occupies residues 538-541; the sequence is DTPG. Residues 538–542 and 592–595 contribute to the GTP site; these read DTPGH and NKID. The G4 stretch occupies residues 592-595; that stretch reads NKID. Residues 628 to 630 form a G5 region; it reads SAK.

It belongs to the TRAFAC class translation factor GTPase superfamily. Classic translation factor GTPase family. IF-2 subfamily.

The protein resides in the cytoplasm. In terms of biological role, one of the essential components for the initiation of protein synthesis. Protects formylmethionyl-tRNA from spontaneous hydrolysis and promotes its binding to the 30S ribosomal subunits. Also involved in the hydrolysis of GTP during the formation of the 70S ribosomal complex. The chain is Translation initiation factor IF-2 from Bifidobacterium longum subsp. infantis (strain ATCC 15697 / DSM 20088 / JCM 1222 / NCTC 11817 / S12).